The following is a 179-amino-acid chain: Large ribosomal subunit protein uL6c (179 aa).

This sequence belongs to the universal ribosomal protein uL6 family. Part of the 50S ribosomal subunit.

It is found in the plastid. Its subcellular location is the chloroplast. Binds 23S rRNA. The polypeptide is Large ribosomal subunit protein uL6c (rpl6) (Guillardia theta (Cryptophyte)).